Here is a 634-residue protein sequence, read N- to C-terminus: Protein IcfG (634 aa).

Residues 306 to 361 form the HAMP domain; it reads HHSTVPILDLTKASQAIAAGDLDYEININQGNRQDEIGILGNSFIYMKNQIKTLIA. Residues 385-633 form the PPM-type phosphatase domain; the sequence is PISLPDLQQW…DDITMIAVYR (249 aa).

In terms of biological role, involved in cross-regulation of inorganic carbon and glucose metabolisms. The polypeptide is Protein IcfG (icfG) (Synechocystis sp. (strain ATCC 27184 / PCC 6803 / Kazusa)).